A 62-amino-acid polypeptide reads, in one-letter code: Trypsin inhibitor MCI-3 (62 aa).

The protein belongs to the protease inhibitor I13 (potato type I serine protease inhibitor) family.

The sequence is that of Trypsin inhibitor MCI-3 from Momordica charantia (Bitter gourd).